The chain runs to 129 residues: Small ribosomal subunit protein uS9 (129 aa).

The disordered stretch occupies residues 98 to 129 (KAQGFLTRDPRKKERKKYGRKKARKSFQFSKR). Residues 110–129 (KERKKYGRKKARKSFQFSKR) are compositionally biased toward basic residues.

The protein belongs to the universal ribosomal protein uS9 family.

The protein is Small ribosomal subunit protein uS9 of Chlamydia trachomatis serovar L2 (strain ATCC VR-902B / DSM 19102 / 434/Bu).